The primary structure comprises 421 residues: Probable 26S proteasome regulatory subunit rpn6 (421 aa).

Residues 221 to 390 form the PCI domain; it reads DFKTAYSYFY…GCLIVYDEPQ (170 aa).

It belongs to the proteasome subunit S9 family. Component of the lid subcomplex of the 19S proteasome regulatory particle complex (also named PA700 complex). The 26S proteasome consists of a 20S proteasome core and two 19S regulatory subunits.

Component of the lid subcomplex of the 26S proteasome, a multiprotein complex involved in the ATP-dependent degradation of ubiquitinated proteins. In the complex, rpn6 is required for proteasome assembly. The polypeptide is Probable 26S proteasome regulatory subunit rpn6 (rpn6) (Schizosaccharomyces pombe (strain 972 / ATCC 24843) (Fission yeast)).